Here is a 367-residue protein sequence, read N- to C-terminus: Phthiodiolone/phenolphthiodiolone dimycocerosates ketoreductase (367 aa).

This sequence belongs to the mer family. Phthiodiolone/phenolphthiodiolone dimycocerosates ketoreductase subfamily.

Functionally, catalyzes the reduction of the keto moiety of phthiodiolone dimycocerosates (DIM B) and glycosylated phenolphthiodiolone dimycocerosates to form the intermediate compounds phthiotriol and glycosylated phenolphthiotriol dimycocerosates during phthiocerol dimycocerosates (DIM A) and glycosylated phenolphthiocerol dimycocerosates (PGL) biosynthesis. This chain is Phthiodiolone/phenolphthiodiolone dimycocerosates ketoreductase, found in Mycobacterium kansasii.